A 138-amino-acid chain; its full sequence is Thyrotropin subunit beta (138 aa).

The N-terminal stretch at 1–20 is a signal peptide; the sequence is MTAIFLMSMVFGLACGQTMS. Disulfide bonds link Cys22/Cys72, Cys36/Cys87, Cys39/Cys125, Cys47/Cys103, Cys51/Cys105, and Cys108/Cys115. Asn43 carries N-linked (GlcNAc...) asparagine glycosylation. A propeptide spanning residues 133 to 138 is cleaved from the precursor; the sequence is VVEFSI.

Belongs to the glycoprotein hormones subunit beta family. As to quaternary structure, heterodimer of a common alpha chain and a unique beta chain which confers biological specificity to thyrotropin, lutropin, follitropin and gonadotropin.

It is found in the secreted. Indispensable for the control of thyroid structure and metabolism. This is Thyrotropin subunit beta (TSHB) from Equus caballus (Horse).